The sequence spans 221 residues: UPF0758 protein YicR (221 aa).

Residues 99–221 (ALLSPEMTRE…YVSFAERGWI (123 aa)) form the MPN domain. Residues His170, His172, and Asp183 each coordinate Zn(2+). Positions 170–183 (HNHPSGCAEPSKAD) match the JAMM motif motif.

The protein belongs to the UPF0758 family. YicR subfamily.

This Salmonella paratyphi A (strain ATCC 9150 / SARB42) protein is UPF0758 protein YicR.